A 461-amino-acid chain; its full sequence is Kynureninase (461 aa).

Pyridoxal 5'-phosphate is bound by residues Leu114, Thr115, 142 to 145 (FPSD), Asp228, His231, and Tyr253. Lys254 is subject to N6-(pyridoxal phosphate)lysine. Pyridoxal 5'-phosphate is bound by residues Trp288 and Asn316.

Belongs to the kynureninase family. Homodimer. Pyridoxal 5'-phosphate serves as cofactor.

It is found in the cytoplasm. It carries out the reaction L-kynurenine + H2O = anthranilate + L-alanine + H(+). The enzyme catalyses 3-hydroxy-L-kynurenine + H2O = 3-hydroxyanthranilate + L-alanine + H(+). The protein operates within amino-acid degradation; L-kynurenine degradation; L-alanine and anthranilate from L-kynurenine: step 1/1. Its pathway is cofactor biosynthesis; NAD(+) biosynthesis; quinolinate from L-kynurenine: step 2/3. Functionally, catalyzes the cleavage of L-kynurenine (L-Kyn) and L-3-hydroxykynurenine (L-3OHKyn) into anthranilic acid (AA) and 3-hydroxyanthranilic acid (3-OHAA), respectively. The protein is Kynureninase of Lodderomyces elongisporus (strain ATCC 11503 / CBS 2605 / JCM 1781 / NBRC 1676 / NRRL YB-4239) (Yeast).